The following is a 241-amino-acid chain: Uridylate kinase (241 aa).

ATP is bound at residue 12–15 (KLSG). Gly-54 is a binding site for UMP. 2 residues coordinate ATP: Gly-55 and Arg-59. UMP contacts are provided by residues Asp-74 and 135-142 (TGNPFFTT). ATP contacts are provided by Thr-162, Tyr-168, and Asp-171.

It belongs to the UMP kinase family. Homohexamer.

The protein resides in the cytoplasm. It catalyses the reaction UMP + ATP = UDP + ADP. The protein operates within pyrimidine metabolism; CTP biosynthesis via de novo pathway; UDP from UMP (UMPK route): step 1/1. Inhibited by UTP. Functionally, catalyzes the reversible phosphorylation of UMP to UDP. This Magnetococcus marinus (strain ATCC BAA-1437 / JCM 17883 / MC-1) protein is Uridylate kinase.